The chain runs to 459 residues: Putrescine aminotransferase (459 aa).

Residues 150 to 151 (GT) and Q274 each bind pyridoxal 5'-phosphate. At K300 the chain carries N6-(pyridoxal phosphate)lysine. Pyridoxal 5'-phosphate is bound at residue T332.

The protein belongs to the class-III pyridoxal-phosphate-dependent aminotransferase family. Putrescine aminotransferase subfamily. Requires pyridoxal 5'-phosphate as cofactor.

It carries out the reaction an alkane-alpha,omega-diamine + 2-oxoglutarate = an omega-aminoaldehyde + L-glutamate. The enzyme catalyses putrescine + 2-oxoglutarate = 1-pyrroline + L-glutamate + H2O. It catalyses the reaction cadaverine + 2-oxoglutarate = 5-aminopentanal + L-glutamate. Its pathway is amine and polyamine degradation; putrescine degradation; 4-aminobutanal from putrescine (transaminase route): step 1/1. Functionally, catalyzes the aminotransferase reaction from putrescine to 2-oxoglutarate, leading to glutamate and 4-aminobutanal, which spontaneously cyclizes to form 1-pyrroline. This is the first step in one of two pathways for putrescine degradation, where putrescine is converted into 4-aminobutanoate (gamma-aminobutyrate or GABA) via 4-aminobutanal. Also functions as a cadaverine transaminase in a a L-lysine degradation pathway to succinate that proceeds via cadaverine, glutarate and L-2-hydroxyglutarate. In Klebsiella pneumoniae (strain 342), this protein is Putrescine aminotransferase.